The following is a 727-amino-acid chain: MSGWDEGAVYYSDQPQFPEAGDAATISPHAVLTKFKEFIRNFEIEQNCFPYREALLDNPKRLVVHLEDLLSFDSDLPSLIRSAPADYLPVFEKAAGEVLTGLKMREANEGGVMEEPLTRDVQILLTSREDPVSMRLLGAQYISKLVKISGISIAASRVKAKATYVFLVCKNCKKTREVPCRPGLGGAIVPRSCDNIPQPGEEPCPLDPWMVVPDRSQYVDQQTLKLQENPEDVPTGELPRNMLLSVDRHLVQTIVPGTRLTVMGIYSIFQASSSSNSHKGAVAIRQPYIRVVGLEDTNEASSRGPANFTPDEEEEFKKFADSQDVYKNICTKIAPSIFGHEDVKRAAACLLFGGSRKSLPDGVKLRGDINVLLLGDPSTAKSQFLKFVEKTAPIAVYTSGKGSSAAGLTASVIRDSSTREFYLEGGAMVLADGGVVCIDEFDKMRPEDRVAIHEAMEQQTISIAKAGITTVLNSRTSVLAAANPPSGRYDDLKTAQDNIDLQTTILSRFDLIFIVKDIRKYSQDKEIASHIIRVHASANKFSDENTDSKEDNWLKRYIQYCRARCHPRLSKDAAENLQRKYVTIRMDMKRRAHETGEAAPIPITVRQLEAIVRLSESLAKMRLSHEATPDDVDKAFKLFDTSTMDAARSGINQQINITGEMANEIKQAETQIKRRMGIGARLSERRLIEDLARMGMNDSMVRRALLIMHQRGEVEYQRERRSIVRKA.

Residues 325–531 enclose the MCM domain; the sequence is VYKNICTKIA…SQDKEIASHI (207 aa). ATP is bound at residue 375-382; sequence GDPSTAKS. The short motif at 507 to 510 is the Arginine finger element; that stretch reads SRFD.

Belongs to the MCM family. Component of the minichromosome maintenance (MCM) complex, a heterotetramer composed of MCM2, MCM3, MCM4, MCM5, MCM6 and MCM7. Interacts with EGT1. As to expression, expressed in shoot apex and flower buds.

It localises to the nucleus. The protein resides in the cytoplasm. The enzyme catalyses ATP + H2O = ADP + phosphate + H(+). In terms of biological role, probable component of the MCM2-7 complex (MCM complex) that may function as a DNA helicase and which is essential to undergo a single round of replication initiation and elongation per cell cycle in eukaryotic cells. This chain is DNA replication licensing factor MCM5 (MCM5), found in Arabidopsis thaliana (Mouse-ear cress).